The chain runs to 215 residues: Large ribosomal subunit protein uL4c (215 aa).

Positions 48 to 57 (SQRQGTISTK) are enriched in polar residues. The interval 48-85 (SQRQGTISTKTRSEVRGGGRKPWRQKGTGRARAGSSRS) is disordered. Basic residues predominate over residues 65–76 (GGRKPWRQKGTG).

This sequence belongs to the universal ribosomal protein uL4 family. As to quaternary structure, part of the 50S ribosomal subunit.

The protein resides in the plastid. It is found in the chloroplast. Probably binds the 23S rRNA. The chain is Large ribosomal subunit protein uL4c (rpl4) from Trieres chinensis (Marine centric diatom).